The sequence spans 193 residues: Potassium-transporting ATPase KdpC subunit (193 aa).

The chain crosses the membrane as a helical span at residues 10–30; that stretch reads AAIIIFSVLTGVIYPALVTVI.

This sequence belongs to the KdpC family. In terms of assembly, the system is composed of three essential subunits: KdpA, KdpB and KdpC.

It localises to the cell membrane. In terms of biological role, part of the high-affinity ATP-driven potassium transport (or Kdp) system, which catalyzes the hydrolysis of ATP coupled with the electrogenic transport of potassium into the cytoplasm. This subunit acts as a catalytic chaperone that increases the ATP-binding affinity of the ATP-hydrolyzing subunit KdpB by the formation of a transient KdpB/KdpC/ATP ternary complex. This is Potassium-transporting ATPase KdpC subunit from Herpetosiphon aurantiacus (strain ATCC 23779 / DSM 785 / 114-95).